The primary structure comprises 274 residues: uncharacterized protein (274 aa).

A compositionally biased stretch (basic and acidic residues) spans 1 to 15; the sequence is MEESKTKRKEDRIDL. Residues 1-40 are disordered; the sequence is MEESKTKRKEDRIDLKNTPPQKKSKRDSTNDETARTSLRS. Residues 41 to 87 enclose the G-patch domain; the sequence is IMPRGYKMMENMGYKEGETLGSNESALKEPIKVEINTKRRGIRAEKP.

It localises to the cytoplasm. The protein resides in the nucleus. This is an uncharacterized protein from Saccharomyces cerevisiae (strain ATCC 204508 / S288c) (Baker's yeast).